We begin with the raw amino-acid sequence, 141 residues long: Hemoglobin subunit alpha (141 aa).

The Globin domain maps to 1-141 (VLSAADKTNV…VATVLTSKYR (141 aa)). Serine 3 bears the Phosphoserine mark. At lysine 7 the chain carries N6-succinyllysine. Residue threonine 8 is modified to Phosphothreonine. The residue at position 11 (lysine 11) is an N6-succinyllysine. An N6-acetyllysine; alternate modification is found at lysine 16. Residue lysine 16 is modified to N6-succinyllysine; alternate. Tyrosine 24 is modified (phosphotyrosine). Phosphoserine is present on serine 35. Position 40 is an N6-succinyllysine (lysine 40). Serine 49 is subject to Phosphoserine. Histidine 58 is a binding site for O2. Residue histidine 87 coordinates heme b. At serine 102 the chain carries Phosphoserine. Position 108 is a phosphothreonine (threonine 108). Residue serine 124 is modified to Phosphoserine. Residues threonine 134 and threonine 137 each carry the phosphothreonine modification. Phosphoserine is present on serine 138.

Belongs to the globin family. In terms of assembly, heterotetramer of two alpha chains and two beta chains. In terms of tissue distribution, red blood cells.

Its function is as follows. Involved in oxygen transport from the lung to the various peripheral tissues. Functionally, hemopressin acts as an antagonist peptide of the cannabinoid receptor CNR1. Hemopressin-binding efficiently blocks cannabinoid receptor CNR1 and subsequent signaling. This is Hemoglobin subunit alpha (HBA) from Ctenodactylus gundi (Northern gundi).